The sequence spans 1530 residues: Regulating synaptic membrane exocytosis protein 2 (1530 aa).

Residues 1 to 34 (MSAPLGPRGRPAPTPAASQPPPQPEMPDLSHLTE) form a disordered region. The span at 10 to 25 (RPAPTPAASQPPPQPE) shows a compositional bias: pro residues. The RabBD domain occupies 26–194 (MPDLSHLTEE…TKSGAWFYNS (169 aa)). Residues 126–182 (KGDAPTCGICHKTKFADGCGHNCSYCQTKFCARCGGRVSLRSNKVMWVCNLCRKQQE) form an FYVE-type zinc finger. Cys132, Cys135, Cys148, Cys151, Cys156, Cys159, Cys174, and Cys177 together coordinate Zn(2+). 2 disordered regions span residues 195 to 608 (GSNT…ERQK) and 632 to 655 (SGVDTCSSTTLNEEHSHSDKHPVT). 5 stretches are compositionally biased toward basic and acidic residues: residues 210–225 (LRNEEAPQEKKAKLHE), 327–338 (EPGHLNYRDSNR), 357–375 (RDEYERQRREEEYQARYRS), 391–410 (EQMRIHAEVSRARHERRHSD), and 419–443 (EDSRISLLRMDRPSRQRSVSERRAA). Ser409 carries the phosphoserine modification. Residues 458–472 (AQGQSSYPQRTSNHS) show a composition bias toward polar residues. A compositionally biased stretch (basic and acidic residues) spans 484-501 (DRPDMRRADSLRKQHHLD). The segment covering 519-530 (RNDSLSSDQSES) has biased composition (polar residues). Residues 537–546 (RPHKSKKGGK) show a composition bias toward basic residues. The segment covering 567–577 (SCDDVELESES) has biased composition (acidic residues). 2 stretches are compositionally biased toward basic and acidic residues: residues 578-592 (VSEKGDSQKGKRKTS) and 643-653 (NEEHSHSDKHP). The PDZ domain occupies 677 to 763 (DGSVPRDSGA…EPQVELVVSR (87 aa)). At Thr698 the chain carries Phosphothreonine. Residues 771 to 802 (IPDSTHAQLESSSSSFESQKMDRPSISVTSPM) form a disordered region. Phosphoserine occurs at positions 800 and 803. The 124-residue stretch at 814–937 (LSGQLSIKLW…ALLDDEPHWY (124 aa)) folds into the C2 1 domain. Disordered stretches follow at residues 948–982 (PLPRPSPYLPRRQLHGESPTRRLQRSKRISDSEVS), 1003–1122 (LQSS…ERSA), 1130–1149 (RQMKLNKYKQVAGSDPRLEQ), 1154–1187 (KYRSGWDPHRGADTVSTKSSDSDVSDVSAVSRTS), 1242–1263 (SLEKNDGSQSDTAVGALGTSGK), and 1282–1307 (KSRSASQLSQTEGGGKKLRSTVQRST). Positions 1003-1024 (LQSSTLSVPEQVMSSNHCSPSG) are enriched in polar residues. Over residues 1067–1086 (RMDRHRVMDDHYSSDRDRSH) the composition is skewed to basic and acidic residues. Over residues 1088–1101 (RTGSVQTSPSSTPG) the composition is skewed to polar residues. The residue at position 1095 (Ser1095) is a Phosphoserine. Positions 1154-1165 (KYRSGWDPHRGA) are enriched in basic and acidic residues. A Phosphoserine modification is found at Ser1175. Residues 1178–1187 (SDVSAVSRTS) are compositionally biased toward low complexity. A Phosphoserine modification is found at Ser1251. Residues 1376–1494 (AMGDIQVGMM…ELSNMVIGWF (119 aa)) form the C2 2 domain. Ser1515 and Ser1518 each carry phosphoserine.

As to quaternary structure, interacts with TSPOAP1 and RIMBP2. Interacts with PPFIA3 and PPFIA4. Interacts via its zinc finger with the first C2 domain of UNC13A. Forms a complex consisting of UNC13A, RIMS2 and RAB3A. Heterodimer with PCLO. Part of a ternary complex involving PCLO and EPAC2. Interacts with RAB3A and RAB3B that have been activated by GTP-binding. Interacts with RAB3C, RAB3D and RAB26. Detected in testis, pituitary and an insulinoma cell line. Detected at low levels in cerebellar cortex.

Its subcellular location is the synapse. It localises to the synaptosome. Rab effector involved in exocytosis. May act as scaffold protein. Plays a role in dendrite formation by melanocytes. This Mus musculus (Mouse) protein is Regulating synaptic membrane exocytosis protein 2 (Rims2).